A 230-amino-acid polypeptide reads, in one-letter code: Large ribosomal subunit protein uL1 (230 aa).

It belongs to the universal ribosomal protein uL1 family. As to quaternary structure, part of the 50S ribosomal subunit.

Binds directly to 23S rRNA. The L1 stalk is quite mobile in the ribosome, and is involved in E site tRNA release. In terms of biological role, protein L1 is also a translational repressor protein, it controls the translation of the L11 operon by binding to its mRNA. In Nitrobacter hamburgensis (strain DSM 10229 / NCIMB 13809 / X14), this protein is Large ribosomal subunit protein uL1.